We begin with the raw amino-acid sequence, 226 residues long: Ribonuclease 3 (226 aa).

In terms of domain architecture, RNase III spans 6 to 128 (INRLQRKLGY…LIGGVFLDSD (123 aa)). E41 is a binding site for Mg(2+). Residue D45 is part of the active site. Residues D114 and E117 each contribute to the Mg(2+) site. E117 is an active-site residue. The region spanning 155 to 225 (DPKTRLQEFL…AEQALIKLEL (71 aa)) is the DRBM domain.

Belongs to the ribonuclease III family. Homodimer. Mg(2+) is required as a cofactor.

It is found in the cytoplasm. The enzyme catalyses Endonucleolytic cleavage to 5'-phosphomonoester.. Digests double-stranded RNA. Involved in the processing of primary rRNA transcript to yield the immediate precursors to the large and small rRNAs (23S and 16S). Processes some mRNAs, and tRNAs when they are encoded in the rRNA operon. Processes pre-crRNA and tracrRNA of type II CRISPR loci if present in the organism. This chain is Ribonuclease 3, found in Serratia proteamaculans (strain 568).